The sequence spans 38 residues: Large ribosomal subunit protein bL36 (38 aa).

Belongs to the bacterial ribosomal protein bL36 family.

In Enterococcus faecalis (strain ATCC 700802 / V583), this protein is Large ribosomal subunit protein bL36.